The primary structure comprises 513 residues: Probable DNA ligase (513 aa).

Glu213 contacts ATP. The active-site N6-AMP-lysine intermediate is Lys215. ATP-binding residues include Arg220, Arg235, Glu264, Phe304, Arg376, and Lys382.

The protein belongs to the ATP-dependent DNA ligase family. Requires Mg(2+) as cofactor.

The catalysed reaction is ATP + (deoxyribonucleotide)n-3'-hydroxyl + 5'-phospho-(deoxyribonucleotide)m = (deoxyribonucleotide)n+m + AMP + diphosphate.. DNA ligase that seals nicks in double-stranded DNA during DNA replication, DNA recombination and DNA repair. This chain is Probable DNA ligase, found in Anaeromyxobacter dehalogenans (strain 2CP-1 / ATCC BAA-258).